The chain runs to 271 residues: Shikimate dehydrogenase (NADP(+)) (271 aa).

Shikimate is bound by residues 16–18 (SRS) and Thr-63. Residue Lys-67 is the Proton acceptor of the active site. Residues Asn-88 and Asp-104 each contribute to the shikimate site. Residues 128 to 132 (GAGGA), 152 to 157 (NRTASK), and Met-215 contribute to the NADP(+) site. Tyr-217 contributes to the shikimate binding site. Gly-238 lines the NADP(+) pocket.

The protein belongs to the shikimate dehydrogenase family. In terms of assembly, homodimer.

The enzyme catalyses shikimate + NADP(+) = 3-dehydroshikimate + NADPH + H(+). Its pathway is metabolic intermediate biosynthesis; chorismate biosynthesis; chorismate from D-erythrose 4-phosphate and phosphoenolpyruvate: step 4/7. In terms of biological role, involved in the biosynthesis of the chorismate, which leads to the biosynthesis of aromatic amino acids. Catalyzes the reversible NADPH linked reduction of 3-dehydroshikimate (DHSA) to yield shikimate (SA). This is Shikimate dehydrogenase (NADP(+)) from Chromohalobacter salexigens (strain ATCC BAA-138 / DSM 3043 / CIP 106854 / NCIMB 13768 / 1H11).